Here is a 364-residue protein sequence, read N- to C-terminus: Mannose-1-phosphate guanyltransferase (364 aa).

The protein belongs to the transferase hexapeptide repeat family.

It is found in the cytoplasm. It catalyses the reaction alpha-D-mannose 1-phosphate + GTP + H(+) = GDP-alpha-D-mannose + diphosphate. It participates in nucleotide-sugar biosynthesis; GDP-alpha-D-mannose biosynthesis; GDP-alpha-D-mannose from alpha-D-mannose 1-phosphate (GTP route): step 1/1. Its function is as follows. Involved in cell wall synthesis where it is required for glycosylation. Involved in cell cycle progression through cell-size checkpoint. The polypeptide is Mannose-1-phosphate guanyltransferase (MPG1) (Pichia angusta (Yeast)).